The chain runs to 195 residues: SXP/RAL-2-like protein 2 (195 aa).

The tract at residues 162–195 (EKVHGGSHGGLRGGPGGPRDGPRGGPRGGPRGGR) is disordered. Positions 167–195 (GSHGGLRGGPGGPRDGPRGGPRGGPRGGR) are enriched in gly residues.

Belongs to the SXP/RAL-2 family.

The sequence is that of SXP/RAL-2-like protein 2 from Caenorhabditis elegans.